The following is a 102-amino-acid chain: Parathymosin (102 aa).

Residues 1 to 102 (MSEKSVEAAA…RQKTENGASA (102 aa)) form a disordered region. S2 is modified (N-acetylserine). Position 2 is a phosphoserine (S2). N6-acetyllysine is present on K4. Phosphoserine occurs at positions 5 and 13. Over residues 13–37 (SAKDLKEKKEKVEEKAGRKERKKEV) the composition is skewed to basic and acidic residues. Position 15 is an N6-acetyllysine (K15). The span at 38–76 (VEEEENGAEEEEEETAEDGEEEDDGDEEDEEEEEEEDEG) shows a compositional bias: acidic residues. The residue at position 52 (T52) is a Phosphothreonine. The residue at position 92 (K92) is an N6-acetyllysine.

Belongs to the pro/parathymosin family.

Parathymosin may mediate immune function by blocking the effect of prothymosin alpha which confers resistance to certain opportunistic infections. This is Parathymosin (PTMS) from Bos taurus (Bovine).